Here is a 428-residue protein sequence, read N- to C-terminus: MLKSVIENVHALEIFDSRGNPTVEVFVTLSNGVVGKAEVPSGASTGENEAVELRDGGSRLGGKGVMNAVNNVNTEINDALKGLDPHDQPNIDATMIALDGTPNKGRLGANAILGVSMATACAAAKDNHQPLYRYLGGTDLEMPQTFHNVINGGEHADNGIDIQEFMITPVAKTSFRDGFEKIVNVYHTLKKVLEDMGYETGLGDEGGFAPNMKNSEEALKALHESIIKAGYKPGEDIAIACDCAASYFYNKEDGKYHLEGKVLTDEELADYYDKLLDEFPELISMEDPYDENDVEGMVKFTESHKDRIQIVLDDFICTNPKLLNKAIHEGAGNASLIKLNQIGTVTETLETIRLSRKNGYNTMISHRSGETGDTFIADFAVAVNGGQLKSGAPARSERVEKYNRLLEIEEELGKGERLAFFPDNVDLD.

The interval 38-58 (EVPSGASTGENEAVELRDGGS) is disordered. Residue Q163 participates in (2R)-2-phosphoglycerate binding. Residue E205 is the Proton donor of the active site. Mg(2+)-binding residues include D242, E286, and D313. Positions 338, 367, 368, and 389 each coordinate (2R)-2-phosphoglycerate. Residue K338 is the Proton acceptor of the active site.

It belongs to the enolase family. Requires Mg(2+) as cofactor.

Its subcellular location is the cytoplasm. It localises to the secreted. It is found in the cell surface. It carries out the reaction (2R)-2-phosphoglycerate = phosphoenolpyruvate + H2O. Its pathway is carbohydrate degradation; glycolysis; pyruvate from D-glyceraldehyde 3-phosphate: step 4/5. In terms of biological role, catalyzes the reversible conversion of 2-phosphoglycerate (2-PG) into phosphoenolpyruvate (PEP). It is essential for the degradation of carbohydrates via glycolysis. This Lactobacillus gasseri (strain ATCC 33323 / DSM 20243 / BCRC 14619 / CIP 102991 / JCM 1131 / KCTC 3163 / NCIMB 11718 / NCTC 13722 / AM63) protein is Enolase 1.